Here is a 250-residue protein sequence, read N- to C-terminus: MIVEVARVLASSKNAIAFTGAGISAESGVPTFRGKDGLWNKYRPEELATPEAFARNPKLVWEFYKWRINKILKAKPNPAHYALVELEDMGILRAVITQNVDDLHREAGTRNLIELHGNIFRVKCTKCNFKEYLKESQRLEEVLKEDLPKCPRCGSLLRPDVVWFGEPLPREELDRAFKLAEKADAVLVVGTSGLVYPAAYIPYIVKESGGTVIEVNVEESAITPIADFFLRGRAGEVLPRVVHEVRRLLQ.

The Deacetylase sirtuin-type domain maps to 1 to 250 (MIVEVARVLA…VVHEVRRLLQ (250 aa)). 20 to 39 (GAGISAESGVPTFRGKDGLW) contacts NAD(+). Residues Y64 and R67 each coordinate substrate. Residue 98–101 (QNVD) participates in NAD(+) binding. The Proton acceptor role is filled by H116. Zn(2+)-binding residues include C124, C127, C150, and C153. NAD(+) is bound by residues 190-192 (GTS), 216-218 (NVE), and A234.

This sequence belongs to the sirtuin family. Class III subfamily. It depends on Zn(2+) as a cofactor.

Its subcellular location is the cytoplasm. The catalysed reaction is N(6)-acetyl-L-lysyl-[protein] + NAD(+) + H2O = 2''-O-acetyl-ADP-D-ribose + nicotinamide + L-lysyl-[protein]. It carries out the reaction N(6)-succinyl-L-lysyl-[protein] + NAD(+) + H2O = 2''-O-succinyl-ADP-D-ribose + nicotinamide + L-lysyl-[protein]. In terms of biological role, NAD-dependent lysine deacetylase and desuccinylase that specifically removes acetyl and succinyl groups on target proteins. Modulates the activities of several proteins which are inactive in their acylated form. Deacetylates the N-terminal lysine residue of Alba, the major archaeal chromatin protein and that, in turn, increases Alba's DNA binding affinity, thereby repressing transcription. This chain is NAD-dependent protein deacylase, found in Pyrococcus abyssi (strain GE5 / Orsay).